We begin with the raw amino-acid sequence, 366 residues long: GDSL esterase/lipase LTL1 (366 aa).

Residues 1 to 27 form the signal peptide; that stretch reads MNINCSPLGFLISLFFIVTFLAPQVKS. The Nucleophile role is filled by Ser36. N-linked (GlcNAc...) asparagine glycosylation occurs at Asn117. Residues Asp326 and His329 contribute to the active site. N-linked (GlcNAc...) asparagine glycosylation is present at Asn354.

It belongs to the 'GDSL' lipolytic enzyme family. As to quaternary structure, binds to VLG at the endomembrane system. Mostly expressed in flowers, reproductive stems and rosette leaves, and, to a lower extent, in roots.

It is found in the secreted. In terms of biological role, involved in the mechanisms of salt tolerance. Mediates resistance to LiCl and NaCl. In Arabidopsis thaliana (Mouse-ear cress), this protein is GDSL esterase/lipase LTL1.